Reading from the N-terminus, the 436-residue chain is GTPase Der (436 aa).

2 EngA-type G domains span residues 4 to 167 (PVVA…KNIP) and 176 to 351 (VQFC…ENHS). GTP is bound by residues 10-17 (GRPNVGKS), 57-61 (DTGGI), 119-122 (NKVD), 182-189 (GRPNVGKS), 229-233 (DTAGM), and 294-297 (NKWD). Positions 352 to 436 (MRVQTNILND…PIRIFARARK (85 aa)) constitute a KH-like domain.

It belongs to the TRAFAC class TrmE-Era-EngA-EngB-Septin-like GTPase superfamily. EngA (Der) GTPase family. Associates with the 50S ribosomal subunit.

In terms of biological role, GTPase that plays an essential role in the late steps of ribosome biogenesis. The sequence is that of GTPase Der from Bacillus licheniformis (strain ATCC 14580 / DSM 13 / JCM 2505 / CCUG 7422 / NBRC 12200 / NCIMB 9375 / NCTC 10341 / NRRL NRS-1264 / Gibson 46).